The following is a 348-amino-acid chain: MADDRKAALDAALKKIEKNYGKGAIMKLGEKVDQQISTIPSGSLALDVALGVGGYPRGRIVEVYGPESSGKTTVALHAIAEVQKGGGTAAFIDAEHALDPQYAQKLGVNIDDLLLSQPDTGEQGLEIADALVSSGAVDIVVIDSVAALVPRAEIDGEMGDTHVGLQARLMSQALRKLSGSINKTKTIAIFINQIREKVGIMFGNPETTPGGRALKFYSTIRLEVRRAEQLKSGTDIIGNRTKIKVVKNKVAPPFKVAEVDMMYGQGISQEGELLDMAVEQDIVDKSGAWYAYKGDRIGQGRENAKNYMREHQEMMMEVSARVRDAYGIGTGETVIEIEDAQEELPLDE.

Residue 65-72 (GPESSGKT) participates in ATP binding.

This sequence belongs to the RecA family.

The protein localises to the cytoplasm. Functionally, can catalyze the hydrolysis of ATP in the presence of single-stranded DNA, the ATP-dependent uptake of single-stranded DNA by duplex DNA, and the ATP-dependent hybridization of homologous single-stranded DNAs. It interacts with LexA causing its activation and leading to its autocatalytic cleavage. The chain is Protein RecA from Enterococcus gallinarum.